A 469-amino-acid polypeptide reads, in one-letter code: UDP-N-acetylmuramate--L-alanine ligase (469 aa).

112–118 contributes to the ATP binding site; sequence GTHGKTT.

This sequence belongs to the MurCDEF family.

It localises to the cytoplasm. It catalyses the reaction UDP-N-acetyl-alpha-D-muramate + L-alanine + ATP = UDP-N-acetyl-alpha-D-muramoyl-L-alanine + ADP + phosphate + H(+). It participates in cell wall biogenesis; peptidoglycan biosynthesis. Functionally, cell wall formation. The sequence is that of UDP-N-acetylmuramate--L-alanine ligase from Herminiimonas arsenicoxydans.